A 407-amino-acid polypeptide reads, in one-letter code: Putative two-component response regulator ARR19 (407 aa).

One can recognise a Response regulatory domain in the interval 35–150 (NVLVVDTNFT…VMANIWQHIV (116 aa)). Asp-86 is modified (4-aspartylphosphate). The Nuclear localization signal signature appears at 214-217 (RKPR). Residues 217–271 (RMTWTEELHQKFLEAIEIIGGIEKANPKVLVECLQEMRIEGITRSNVASHLQKHR) constitute a DNA-binding region (myb-like GARP).

The protein belongs to the ARR family. Type-B subfamily. As to quaternary structure, binds the target DNA as a monomer. Two-component system major event consists of a His-to-Asp phosphorelay between a sensor histidine kinase (HK) and a response regulator (RR). In plants, the His-to-Asp phosphorelay involves an additional intermediate named Histidine-containing phosphotransfer protein (HPt). This multistep phosphorelay consists of a His-Asp-His-Asp sequential transfer of a phosphate group between first a His and an Asp of the HK protein, followed by the transfer to a conserved His of the HPt protein and finally the transfer to an Asp in the receiver domain of the RR protein. Detected in trichomes and siliques.

It localises to the nucleus. Putative transcriptional activator that binds specifically to the DNA sequence 5'-[AG]GATT-3'. Functions as a response regulator involved in His-to-Asp phosphorelay signal transduction system. Phosphorylation of the Asp residue in the receiver domain activates the ability of the protein to promote the transcription of target genes. Could directly activate some type-A response regulators in response to cytokinins. This is Putative two-component response regulator ARR19 (ARR19) from Arabidopsis thaliana (Mouse-ear cress).